Here is a 410-residue protein sequence, read N- to C-terminus: Homeobox protein Hox-A3a (410 aa).

The segment at 79–126 (VTDTSDNKQPPTAPSGPSSPSSLNQIPNIDSAAKNPVHVSPTPSTRKH) is disordered. The short motif at 127–132 (IFPWMK) is the Antp-type hexapeptide element. Positions 163–222 (SKRARTAYTSAQLVELEKEFHFNRYLCRPRRVEMANLLNLTERQIKIWFQNRRMKYKKDQ) form a DNA-binding region, homeobox. Residues 222–249 (QKGLGMMPSPGAQSPHSPVSLSSGGGGG) form a disordered region.

The protein belongs to the Antp homeobox family.

The protein resides in the nucleus. Functionally, sequence-specific transcription factor which is part of a developmental regulatory system that provides cells with specific positional identities on the anterior-posterior axis. This Danio rerio (Zebrafish) protein is Homeobox protein Hox-A3a (hoxa3a).